The following is a 263-amino-acid chain: Alpha-tubulin N-acetyltransferase 2 (263 aa).

One can recognise an N-acetyltransferase domain in the interval 1 to 181 (MEIAFDLSTI…NKYALCSNFF (181 aa)). Position 115-128 (115-128 (FFVVPTEQRSGNGF)) interacts with acetyl-CoA. Disordered regions lie at residues 191–223 (TPRQ…NRPR) and 242–263 (EVDP…RRIW). Positions 200-212 (RASSAVSSHASSR) are enriched in low complexity. The segment covering 253–263 (NARDFGHRRIW) has biased composition (basic and acidic residues).

It belongs to the acetyltransferase ATAT1 family. In terms of tissue distribution, expressed in touch receptor neurons and in a subset of ciliated neurons, including PDE, ADE, CEP, and OLQ neurons.

It catalyses the reaction L-lysyl-[alpha-tubulin] + acetyl-CoA = N(6)-acetyl-L-lysyl-[alpha-tubulin] + CoA + H(+). Functionally, specifically acetylates 'Lys-40' in alpha-tubulin/mec-12 on the lumenal side of microtubules. Promotes microtubule destabilization and accelerates microtubule dynamics; this activity may be independent of acetylation activity. Acetylates alpha-tubulin with a slow enzymatic rate, due to a catalytic site that is not optimized for acetyl transfer. Enters the microtubule through each end and diffuses quickly throughout the lumen of microtubules. Acetylates only long/old microtubules because of its slow acetylation rate since it does not have time to act on dynamically unstable microtubules before the enzyme is released. Required for the maintenance of touch receptor neurons and possibly other type of neurons involved in locomotion. This is Alpha-tubulin N-acetyltransferase 2 (atat-2) from Caenorhabditis elegans.